The sequence spans 145 residues: Leghemoglobin-2 (145 aa).

The Globin domain occupies 3–145 (AFSDKQEGLV…ELAAAIKKAY (143 aa)). 2 positions are modified to nitrated tyrosine: tyrosine 26 and tyrosine 31. Serine 46 is a heme b binding site. Position 46 is a phosphoserine (serine 46). Residue histidine 62 coordinates O2. Lysine 65, histidine 93, and lysine 96 together coordinate heme b. Residue tyrosine 134 is modified to Nitrated tyrosine.

Belongs to the plant globin family. In terms of assembly, monomer. Nitrated in effective nodules and particularly in hypoxic conditions; this mechanism may play a protective role in the symbiosis by buffering toxic peroxynitrite NO(2)(-). Nitration level decrease during nodule senescence. Post-translationally, phosphorylation at Ser-46 disrupts the molecular environment of its porphyrin ring oxygen binding pocket, thus leading to a reduced oxygen consumption and to the delivery of oxygen O(2) to symbiosomes. As to expression, root nodules.

Its subcellular location is the cytoplasm. It is found in the cytosol. The protein resides in the nucleus. Functionally, leghemoglobin that reversibly binds oxygen O(2) through a pentacoordinated heme iron. In root nodules, facilitates the diffusion of oxygen to the bacteroids while preventing the bacterial nitrogenase from being inactivated by buffering dioxygen, nitric oxide and carbon monoxide, and promoting the formation of reactive oxygen species (ROS, e.g. H(2)O(2)). This role is essential for symbiotic nitrogen fixation (SNF). In Vigna unguiculata (Cowpea), this protein is Leghemoglobin-2.